Reading from the N-terminus, the 224-residue chain is Pyridoxine/pyridoxamine 5'-phosphate oxidase (224 aa).

Residues 69–74, 83–84, R89, K90, and Q112 contribute to the FMN site; these read RHVLLK and FT. K74 provides a ligand contact to substrate. Residues Y130, R134, and S138 each coordinate substrate. Residues 148–149 and W194 each bind FMN; that span reads QS. Residue 200 to 202 participates in substrate binding; it reads RMH. Residue R204 coordinates FMN.

It belongs to the pyridoxamine 5'-phosphate oxidase family. In terms of assembly, homodimer. It depends on FMN as a cofactor.

The catalysed reaction is pyridoxamine 5'-phosphate + O2 + H2O = pyridoxal 5'-phosphate + H2O2 + NH4(+). It carries out the reaction pyridoxine 5'-phosphate + O2 = pyridoxal 5'-phosphate + H2O2. Its pathway is cofactor metabolism; pyridoxal 5'-phosphate salvage; pyridoxal 5'-phosphate from pyridoxamine 5'-phosphate: step 1/1. It functions in the pathway cofactor metabolism; pyridoxal 5'-phosphate salvage; pyridoxal 5'-phosphate from pyridoxine 5'-phosphate: step 1/1. Functionally, catalyzes the oxidation of either pyridoxine 5'-phosphate (PNP) or pyridoxamine 5'-phosphate (PMP) into pyridoxal 5'-phosphate (PLP). The polypeptide is Pyridoxine/pyridoxamine 5'-phosphate oxidase (Acidothermus cellulolyticus (strain ATCC 43068 / DSM 8971 / 11B)).